The primary structure comprises 279 residues: MAGAVATVSVGLAWLGLMAAAASATQFRVGGGRGWSVPDANAEPYNSWAGRMRFQIGDQLLFVYPKEMDAVVVVDQGAYDACNTSSSVAGGGGGRYDDGNTVFTFDRSGPFFFISGNEANCRAGEKLVVVVMADRGGRHAPPPSPPAVPPPVAPVPMPSPASSPPSPAPAAATPSLAPSPVATTPSPSPSVSPMAPAPAPTTSTPSSPPAPAAMAPSPSTTPGGVAQPPPPPGTDGANATTPAAPAANDRSGAAAAAPVVAGVVVTSLGAYIGYAMLAI.

The N-terminal stretch at 1-24 (MAGAVATVSVGLAWLGLMAAAASA) is a signal peptide. Positions 25–133 (TQFRVGGGRG…GEKLVVVVMA (109 aa)) constitute a Phytocyanin domain. The cysteines at positions 82 and 121 are disulfide-linked. A glycan (N-linked (GlcNAc...) asparagine) is linked at Asn-83. The interval 138–256 (RHAPPPSPPA…ANDRSGAAAA (119 aa)) is disordered. Residues 140 to 168 (APPPSPPAVPPPVAPVPMPSPASSPPSPA) are compositionally biased toward pro residues. A compositionally biased stretch (low complexity) spans 169–185 (PAAATPSLAPSPVATTP). The segment covering 186 to 199 (SPSPSVSPMAPAPA) has biased composition (pro residues). Low complexity-rich tracts occupy residues 212-226 (AAMAPSPSTTPGGVA) and 234-256 (TDGANATTPAAPAANDRSGAAAA). Asn-238 is a glycosylation site (N-linked (GlcNAc...) asparagine). Ser-251 is lipidated: GPI-anchor amidated serine. Residues 252–279 (GAAAAAPVVAGVVVTSLGAYIGYAMLAI) constitute a propeptide, removed in mature form.

This sequence belongs to the early nodulin-like (ENODL) family. As to expression, specifically expressed in reproductive tissues. Mainly observed in developing seeds and in mature leaves.

The protein localises to the cell membrane. Functionally, may act as a carbohydrate transporter. Promotes tolerance to salt stress in a redox-dependent manner. This is Early nodulin-like protein 18 from Oryza sativa subsp. japonica (Rice).